A 594-amino-acid polypeptide reads, in one-letter code: UvrABC system protein C (594 aa).

The GIY-YIG domain maps to 14 to 91 (DKPGCYLMKD…IKKHDPKYNV (78 aa)). The region spanning 196–231 (SDIKEQLRERMEKAAEDLDFERAKELRDTIAQMEKV) is the UVR domain.

Belongs to the UvrC family. In terms of assembly, interacts with UvrB in an incision complex.

The protein resides in the cytoplasm. In terms of biological role, the UvrABC repair system catalyzes the recognition and processing of DNA lesions. UvrC both incises the 5' and 3' sides of the lesion. The N-terminal half is responsible for the 3' incision and the C-terminal half is responsible for the 5' incision. The protein is UvrABC system protein C of Shouchella clausii (strain KSM-K16) (Alkalihalobacillus clausii).